An 86-amino-acid chain; its full sequence is UPF0297 protein LSL_1110 (86 aa).

It belongs to the UPF0297 family.

The chain is UPF0297 protein LSL_1110 from Ligilactobacillus salivarius (strain UCC118) (Lactobacillus salivarius).